Consider the following 370-residue polypeptide: Fe(2+) transport protein 2 (370 aa).

Residues 1–25 (MMMSSSQTPVRIAFVFLVILAATDA) form the signal peptide. Topologically, residues 26-55 (HSDHRTPPPACGGAAVGGECHSVARALRLK) are extracellular. Residues 56 to 76 (LIAIPAILAASVAGVCLPLFA) form a helical membrane-spanning segment. At 77 to 85 (RSVPALRPD) the chain is on the cytoplasmic side. A helical membrane pass occupies residues 86-106 (GGLFAVVKAFASGVILGTGYM). The Extracellular portion of the chain corresponds to 107-130 (HVLPDSFNDLTSPCLPRKPWSEFP). A helical transmembrane segment spans residues 131 to 151 (FAAFVAMLAAVFTLMVDSLML). The Cytoplasmic portion of the chain corresponds to 152-215 (TFHTRGSKGR…TTKAQLLRNR (64 aa)). The chain crosses the membrane as a helical span at residues 216–236 (VIVQVLEMGIVVHSVVIGLGM). Residues 237-247 (GASQNVCTIRP) lie on the Extracellular side of the membrane. Residues 248-268 (LVAALCFHQMFEGMGLGGCIL) traverse the membrane as a helical segment. Residues 269-278 (QAGYGGRTRS) lie on the Cytoplasmic side of the membrane. Residues 279–299 (ALVFFFSTTTPFGIALGLALT) traverse the membrane as a helical segment. Residues 300–309 (RVYSDSSPTA) lie on the Extracellular side of the membrane. The helical transmembrane segment at 310–330 (LVVVGLLNAASAGLLHYMALV) threads the bilayer. Residues 331–349 (ELLAADFMGPKLQGNVRLQ) are Cytoplasmic-facing. A helical transmembrane segment spans residues 350-370 (LAASLAILLGAGGMSVMAKWA).

Belongs to the ZIP transporter (TC 2.A.5) family.

The protein resides in the cell membrane. In terms of biological role, iron transporter that may play a role in the uptake of iron from the rhizosphere across the plasma membrane in the root epidermal layer. This is Fe(2+) transport protein 2 (IRT2) from Oryza sativa subsp. japonica (Rice).